The sequence spans 551 residues: Probable terpene synthase 8 (551 aa).

Residues Asp307, Asp311, and Glu457 each coordinate Mg(2+). The DDXXD motif motif lies at 307-311 (DDTYD).

The protein belongs to the terpene synthase family. Mg(2+) is required as a cofactor.

Probable sesquiterpene synthase. This chain is Probable terpene synthase 8 (TPS8), found in Ricinus communis (Castor bean).